Consider the following 641-residue polypeptide: RING finger containing E3 ubiquitin-protein ligase WSV403 (641 aa).

The RING-type; atypical zinc finger occupies C329–F371.

The enzyme catalyses S-ubiquitinyl-[E2 ubiquitin-conjugating enzyme]-L-cysteine + [acceptor protein]-L-lysine = [E2 ubiquitin-conjugating enzyme]-L-cysteine + N(6)-ubiquitinyl-[acceptor protein]-L-lysine.. It participates in protein modification; protein ubiquitination. In terms of biological role, probable E3 ubiquitin-protein ligase which accepts ubiquitin from an E2 ubiquitin-conjugating enzyme in the form of a thioester and then directly transfers the ubiquitin to targeted substrates. The chain is RING finger containing E3 ubiquitin-protein ligase WSV403 from White spot syndrome virus (isolate Shrimp/China/Tongan/1996) (WSSV).